We begin with the raw amino-acid sequence, 306 residues long: D-alanine--D-alanine ligase (306 aa).

Residues 104 to 303 (KMLWKAFGLP…FEQLVVKILE (200 aa)) form the ATP-grasp domain. Residue 134–189 (VAKLGLPLMVKPSLEGSSVGLTKVKAVEELKSAVEYALKFDNTILIEEWLAGDELT) participates in ATP binding. The Mg(2+) site is built by aspartate 257, glutamate 270, and asparagine 272.

It belongs to the D-alanine--D-alanine ligase family. It depends on Mg(2+) as a cofactor. The cofactor is Mn(2+).

Its subcellular location is the cytoplasm. The enzyme catalyses 2 D-alanine + ATP = D-alanyl-D-alanine + ADP + phosphate + H(+). It functions in the pathway cell wall biogenesis; peptidoglycan biosynthesis. In terms of biological role, cell wall formation. The chain is D-alanine--D-alanine ligase from Haemophilus influenzae (strain 86-028NP).